Consider the following 367-residue polypeptide: Secondary metabolism regulator laeA (367 aa).

The disordered stretch occupies residues Met-1–Asn-82. A compositionally biased stretch (polar residues) spans Leu-19–Met-41. Basic and acidic residues-rich tracts occupy residues Thr-47–Pro-56 and Lys-71–Asn-82.

The protein belongs to the methyltransferase superfamily. LaeA methyltransferase family. As to quaternary structure, component of the heterotrimeric velvet complex composed of laeA, veA and velB; VeA acting as a bridging protein between laeA and velB.

The protein resides in the nucleus. It carries out the reaction L-methionyl-[protein] + S-adenosyl-L-methionine = S-methyl-L-methionyl-[protein] + S-adenosyl-L-homocysteine. Methyltransferase that performs automethylation. No other methyl-accepting substrate has been identified yet. Component of the velvet transcription factor complex that acts as a global regulator for secondary metabolite gene expression. Controls the expression of the monacolin K gene clusters. Also regulates pigmentation. This is Secondary metabolism regulator laeA from Monascus pilosus (Red mold).